A 231-amino-acid chain; its full sequence is Large ribosomal subunit protein uL1 (231 aa).

It belongs to the universal ribosomal protein uL1 family. In terms of assembly, part of the 50S ribosomal subunit.

Its function is as follows. Binds directly to 23S rRNA. The L1 stalk is quite mobile in the ribosome, and is involved in E site tRNA release. Functionally, protein L1 is also a translational repressor protein, it controls the translation of the L11 operon by binding to its mRNA. This is Large ribosomal subunit protein uL1 from Verminephrobacter eiseniae (strain EF01-2).